The primary structure comprises 214 residues: Small ribosomal subunit protein uS5 (214 aa).

The S5 DRBM domain occupies 54 to 117; sequence LKYEVVDIKV…RDAKMNILPV (64 aa).

The protein belongs to the universal ribosomal protein uS5 family. As to quaternary structure, part of the 30S ribosomal subunit. Contacts protein S4.

Its function is as follows. With S4 and S12 plays an important role in translational accuracy. The protein is Small ribosomal subunit protein uS5 of Saccharolobus islandicus (strain Y.N.15.51 / Yellowstone #2) (Sulfolobus islandicus).